A 337-amino-acid chain; its full sequence is MYNTDVVIIGAGPVGLFAVFQAGMFGMKCHVIDAQETIGGQCITLYPEKPIYDIPAYPKIVAEELIKQLELQAAPFKPVYHLNQQAIELNKQGDFFEIKTSKNTLIKSKIIIIAAGAGSFGPNKPPLANIEDFEGKSVFYFINDKNKFTGKNIVIAGGGDSAVDWAISLSEIANKIYLVHRRDKFTASPESVRQLRNLAETGKIELVIGYQLNALDGNNGELQSVIVRDLQNNTHKLEANILLPFFGLKQNLGSLANWGLNVKLQHIEVDNSYYQTNIEGIYAIGDIAHYTGKLKLILIGFAEAASSLHHAYSRVFDGKALHFEYSTTKYGKNGKKK.

Aspartate 33, glutamine 41, tyrosine 46, alanine 86, phenylalanine 120, aspartate 286, and threonine 327 together coordinate FAD.

The protein belongs to the ferredoxin--NADP reductase type 2 family. As to quaternary structure, homodimer. The cofactor is FAD.

The enzyme catalyses 2 reduced [2Fe-2S]-[ferredoxin] + NADP(+) + H(+) = 2 oxidized [2Fe-2S]-[ferredoxin] + NADPH. The protein is Ferredoxin--NADP reductase of Rickettsia canadensis (strain McKiel).